Here is a 230-residue protein sequence, read N- to C-terminus: Heptaprenylglyceryl phosphate synthase (230 aa).

Sn-glycerol 1-phosphate is bound at residue lysine 12. Mg(2+) is bound by residues aspartate 14 and threonine 40. Residues tyrosine 159–glycine 164, glycine 189, and glycine 209–aspartate 210 each bind sn-glycerol 1-phosphate.

It belongs to the GGGP/HepGP synthase family. Group I subfamily. In terms of assembly, homodimer. It depends on Mg(2+) as a cofactor.

It catalyses the reaction sn-glycerol 1-phosphate + all-trans-heptaprenyl diphosphate = 3-heptaprenyl-sn-glycero-1-phosphate + diphosphate. It functions in the pathway membrane lipid metabolism; glycerophospholipid metabolism. Prenyltransferase that catalyzes in vivo the transfer of the heptaprenyl moiety of heptaprenyl pyrophosphate (HepPP; 35 carbon atoms) to the C3 hydroxyl of sn-glycerol-1-phosphate (G1P), producing heptaprenylglyceryl phosphate (HepGP). This reaction is an ether-bond-formation step in the biosynthesis of archaea-type G1P-based membrane lipids found in Bacillales. In Staphylococcus aureus (strain JH1), this protein is Heptaprenylglyceryl phosphate synthase.